A 209-amino-acid polypeptide reads, in one-letter code: MARYTGPVCRLCRRETMKLFLKGDRCYTDKCALERRNYAPGQHGQGRTKVSDYGTQLREKQRMKRTYGLLEKQFRAYFDKADSMKGVTGENLLVLLERRLDSAVYRLGFASSRTEGRALVRQGHFLVNGRKVNIPSYVMRPNDVIELREKSRKITRINDALDGVMRRGLPSWVELDREAFKGTFKTLPVREEMTTPAFQEQLIVELYSK.

Residues 98–159 (RRLDSAVYRL…KSRKITRIND (62 aa)) enclose the S4 RNA-binding domain.

This sequence belongs to the universal ribosomal protein uS4 family. As to quaternary structure, part of the 30S ribosomal subunit. Contacts protein S5. The interaction surface between S4 and S5 is involved in control of translational fidelity.

Its function is as follows. One of the primary rRNA binding proteins, it binds directly to 16S rRNA where it nucleates assembly of the body of the 30S subunit. Functionally, with S5 and S12 plays an important role in translational accuracy. The polypeptide is Small ribosomal subunit protein uS4 (Syntrophotalea carbinolica (strain DSM 2380 / NBRC 103641 / GraBd1) (Pelobacter carbinolicus)).